We begin with the raw amino-acid sequence, 477 residues long: ATP-dependent rRNA helicase RRP3 (477 aa).

The tract at residues Met-1–Ala-22 is disordered. The Q motif signature appears at Lys-65–Ser-93. One can recognise a Helicase ATP-binding domain in the interval Ile-96 to Val-267. Ala-109–Thr-116 is a binding site for ATP. The DEAD box signature appears at Asp-215–Asp-218. Positions Tyr-294 to Leu-438 constitute a Helicase C-terminal domain. A disordered region spans residues Ala-452–Arg-477.

This sequence belongs to the DEAD box helicase family. DDX47/RRP3 subfamily. In terms of assembly, interacts with the SSU processome.

The protein resides in the nucleus. The catalysed reaction is ATP + H2O = ADP + phosphate + H(+). In terms of biological role, ATP-dependent rRNA helicase required for pre-ribosomal RNA processing. Involved in the maturation of the 35S-pre-rRNA and to its cleavage to mature 18S rRNA. The polypeptide is ATP-dependent rRNA helicase RRP3 (Debaryomyces hansenii (strain ATCC 36239 / CBS 767 / BCRC 21394 / JCM 1990 / NBRC 0083 / IGC 2968) (Yeast)).